A 477-amino-acid polypeptide reads, in one-letter code: UDP-N-acetylmuramate--L-alanine ligase (477 aa).

Gly125 to Thr131 is a binding site for ATP.

Belongs to the MurCDEF family.

It is found in the cytoplasm. It catalyses the reaction UDP-N-acetyl-alpha-D-muramate + L-alanine + ATP = UDP-N-acetyl-alpha-D-muramoyl-L-alanine + ADP + phosphate + H(+). Its pathway is cell wall biogenesis; peptidoglycan biosynthesis. In terms of biological role, cell wall formation. This chain is UDP-N-acetylmuramate--L-alanine ligase, found in Acidothermus cellulolyticus (strain ATCC 43068 / DSM 8971 / 11B).